A 320-amino-acid chain; its full sequence is Zona pellucida-binding protein 1 (320 aa).

Asparagine 85 and asparagine 158 each carry an N-linked (GlcNAc...) asparagine glycan.

The protein belongs to the zona pellucida-binding protein Sp38 family.

Its subcellular location is the cytoplasmic vesicle. The protein localises to the secretory vesicle. It localises to the acrosome. It is found in the secreted. The protein resides in the acrosome membrane. In terms of biological role, plays a role in sperm morphogenesis and in sperm-oocyte interaction during fertilization. In Gallus gallus (Chicken), this protein is Zona pellucida-binding protein 1 (ZPBP1).